The following is a 345-amino-acid chain: Probable galacturonosyltransferase-like 3 (345 aa).

At 1–7 the chain is on the cytoplasmic side; sequence MSSLRLR. The helical; Signal-anchor for type II membrane protein transmembrane segment at 8 to 28 threads the bilayer; sequence LCLLLLLPITISCVTVTLTDL. The Lumenal portion of the chain corresponds to 29 to 345; sequence PAFREAPAFR…FRYSPLISDS (317 aa). N-linked (GlcNAc...) asparagine glycosylation is present at N197.

The protein belongs to the glycosyltransferase 8 family.

It is found in the golgi apparatus membrane. It functions in the pathway glycan metabolism; pectin biosynthesis. Its function is as follows. May be involved in pectin and/or xylans biosynthesis in cell walls. This chain is Probable galacturonosyltransferase-like 3 (GATL3), found in Arabidopsis thaliana (Mouse-ear cress).